Consider the following 236-residue polypeptide: Small ribosomal subunit protein eS6 (236 aa).

Phosphoserine is present on residues Ser232 and Ser233.

It belongs to the eukaryotic ribosomal protein eS6 family. Post-translationally, phosphorylated.

This is Small ribosomal subunit protein eS6 (RPS6) from Debaryomyces hansenii (strain ATCC 36239 / CBS 767 / BCRC 21394 / JCM 1990 / NBRC 0083 / IGC 2968) (Yeast).